Consider the following 417-residue polypeptide: Serine hydroxymethyltransferase (417 aa).

(6S)-5,6,7,8-tetrahydrofolate is bound by residues Leu121 and 125–127; that span reads GHL. An N6-(pyridoxal phosphate)lysine modification is found at Lys229. 355–357 is a binding site for (6S)-5,6,7,8-tetrahydrofolate; the sequence is SPF.

It belongs to the SHMT family. Homodimer. Requires pyridoxal 5'-phosphate as cofactor.

It localises to the cytoplasm. It catalyses the reaction (6R)-5,10-methylene-5,6,7,8-tetrahydrofolate + glycine + H2O = (6S)-5,6,7,8-tetrahydrofolate + L-serine. Its pathway is one-carbon metabolism; tetrahydrofolate interconversion. It functions in the pathway amino-acid biosynthesis; glycine biosynthesis; glycine from L-serine: step 1/1. In terms of biological role, catalyzes the reversible interconversion of serine and glycine with tetrahydrofolate (THF) serving as the one-carbon carrier. This reaction serves as the major source of one-carbon groups required for the biosynthesis of purines, thymidylate, methionine, and other important biomolecules. Also exhibits THF-independent aldolase activity toward beta-hydroxyamino acids, producing glycine and aldehydes, via a retro-aldol mechanism. This chain is Serine hydroxymethyltransferase, found in Shewanella putrefaciens (strain CN-32 / ATCC BAA-453).